Reading from the N-terminus, the 126-residue chain is Protein ApaG (126 aa).

The ApaG domain maps to 2–126 (SDPRYQIDVS…FRLAVPGALH (125 aa)).

This is Protein ApaG from Pseudomonas putida (strain ATCC 700007 / DSM 6899 / JCM 31910 / BCRC 17059 / LMG 24140 / F1).